Here is a 278-residue protein sequence, read N- to C-terminus: MARDKEDQNNENPSIVQNMSFPFNTIFLISSAIFLVTAAFWFVAVMTLHYRTDECNRFVTTPGIFISFSLLAMSLTGFYAAYFKSDCLFRIHFFIFFLWMFVVVSKAIFVIFLHKETNPRLFPGTKIYEFRYEDYSGWVSRLVIKDDEWYRTRRCLVKDNVCNRLNHKMPASEFYQMNLTPIQSGCCKPPLSCGLNYEKPNNWTVSRYYNNLEVDCKRWNNSADTLCFDCDSCKAVIIADVHNTSFSITVNIIHIIFSLCIGMTGWFAWLRILRESQK.

The Cytoplasmic segment spans residues 1 to 25 (MARDKEDQNNENPSIVQNMSFPFNT). Residues 26–46 (IFLISSAIFLVTAAFWFVAVM) form a helical membrane-spanning segment. Topologically, residues 47–62 (TLHYRTDECNRFVTTP) are extracellular. Residues 63-83 (GIFISFSLLAMSLTGFYAAYF) form a helical membrane-spanning segment. At 84–92 (KSDCLFRIH) the chain is on the cytoplasmic side. Residues 93 to 113 (FFIFFLWMFVVVSKAIFVIFL) traverse the membrane as a helical segment. At 114–249 (HKETNPRLFP…DVHNTSFSIT (136 aa)) the chain is on the extracellular side. N-linked (GlcNAc...) asparagine glycosylation is found at asparagine 202, asparagine 220, and asparagine 243. Residues 250 to 270 (VNIIHIIFSLCIGMTGWFAWL) form a helical membrane-spanning segment. The Cytoplasmic segment spans residues 271–278 (RILRESQK).

Belongs to the tetraspanin (TM4SF) family.

It localises to the membrane. Functionally, may be involved in the regulation of cell differentiation. In Arabidopsis thaliana (Mouse-ear cress), this protein is Tetraspanin-13 (TET13).